The primary structure comprises 77 residues: Large ribosomal subunit protein bL28 (77 aa).

The protein belongs to the bacterial ribosomal protein bL28 family.

The sequence is that of Large ribosomal subunit protein bL28 from Polynucleobacter necessarius subsp. necessarius (strain STIR1).